Here is a 445-residue protein sequence, read N- to C-terminus: Phosphoglucosamine mutase (445 aa).

Serine 102 serves as the catalytic Phosphoserine intermediate. Serine 102, aspartate 241, aspartate 243, and aspartate 245 together coordinate Mg(2+). The residue at position 102 (serine 102) is a Phosphoserine.

Belongs to the phosphohexose mutase family. Requires Mg(2+) as cofactor. In terms of processing, activated by phosphorylation.

The enzyme catalyses alpha-D-glucosamine 1-phosphate = D-glucosamine 6-phosphate. Catalyzes the conversion of glucosamine-6-phosphate to glucosamine-1-phosphate. This Shigella flexneri serotype 5b (strain 8401) protein is Phosphoglucosamine mutase.